A 408-amino-acid chain; its full sequence is Na(+)/H(+) antiporter NhaA 2 (408 aa).

Helical transmembrane passes span 36 to 56 (GILL…GLGV), 79 to 99 (ILLW…GLEI), 115 to 135 (ALPV…YFLF), 145 to 165 (GWGI…SLLG), 174 to 194 (IFLA…IAVF), 197 to 217 (SELH…LMVF), 225 to 245 (LFFY…SGIH), 281 to 301 (FIIM…SEML), 310 to 330 (LGII…MSWL), 348 to 368 (VLGL…IALL), and 381 to 401 (FAIL…LSSY).

The protein belongs to the NhaA Na(+)/H(+) (TC 2.A.33) antiporter family.

The protein localises to the cell inner membrane. It catalyses the reaction Na(+)(in) + 2 H(+)(out) = Na(+)(out) + 2 H(+)(in). Its function is as follows. Na(+)/H(+) antiporter that extrudes sodium in exchange for external protons. The protein is Na(+)/H(+) antiporter NhaA 2 of Flavobacterium johnsoniae (strain ATCC 17061 / DSM 2064 / JCM 8514 / BCRC 14874 / CCUG 350202 / NBRC 14942 / NCIMB 11054 / UW101) (Cytophaga johnsonae).